The chain runs to 35 residues: Pheromone-binding protein 2 (35 aa).

This sequence belongs to the PBP/GOBP family. In terms of assembly, homodimer. As to expression, antenna.

In terms of biological role, this major soluble protein in olfactory sensilla of male moths might serve to solubilize the extremely hydrophobic pheromone molecules and to transport pheromone through the aqueous lymph to receptors located on olfactory cilia. In Lymantria dispar (Gypsy moth), this protein is Pheromone-binding protein 2.